The chain runs to 197 residues: TATA-box-binding protein (197 aa).

2 repeat units span residues 10 to 86 and 101 to 177.

This sequence belongs to the TBP family.

General factor that plays a role in the activation of archaeal genes transcribed by RNA polymerase. Binds specifically to the TATA box promoter element which lies close to the position of transcription initiation. The sequence is that of TATA-box-binding protein from Pyrobaculum neutrophilum (strain DSM 2338 / JCM 9278 / NBRC 100436 / V24Sta) (Thermoproteus neutrophilus).